An 88-amino-acid polypeptide reads, in one-letter code: Large ribosomal subunit protein uL23c (88 aa).

This sequence belongs to the universal ribosomal protein uL23 family. Part of the 50S ribosomal subunit.

The protein resides in the plastid. Its subcellular location is the chloroplast. Binds to 23S rRNA. The polypeptide is Large ribosomal subunit protein uL23c (rpl23) (Spirogyra maxima (Green alga)).